Reading from the N-terminus, the 239-residue chain is Tetratricopeptide repeat protein 9B (239 aa).

Disordered stretches follow at residues 1–57 (MQRG…LGAA) and 99–126 (QGAR…SEEQ). Serine 7 and serine 27 each carry phosphoserine. Over residues 16–31 (PEPPPRPPPALSPPGS) the composition is skewed to pro residues. The stretch at 65–99 (AVAFKAEGQRCYREKKFREAIGKYHRALLQLKAAQ) is one TPR 1 repeat. Residues 106–116 (LPAPAPGPTSS) are compositionally biased toward pro residues. The stretch at 171–204 (FKATYRAGIAFYHLGDYARALRYLQEARSREPTD) is one TPR 2 repeat.

It belongs to the TTC9 family.

The protein is Tetratricopeptide repeat protein 9B (TTC9B) of Homo sapiens (Human).